The primary structure comprises 906 residues: Protein translocase subunit SecA (906 aa).

Residues Gln89, 107–111 (GEGKT), and Asp501 each bind ATP. Residues Cys891, Cys893, Cys902, and His903 each contribute to the Zn(2+) site.

The protein belongs to the SecA family. Monomer and homodimer. Part of the essential Sec protein translocation apparatus which comprises SecA, SecYEG and auxiliary proteins SecDF-YajC and YidC. It depends on Zn(2+) as a cofactor.

It localises to the cell inner membrane. It is found in the cytoplasm. The enzyme catalyses ATP + H2O + cellular proteinSide 1 = ADP + phosphate + cellular proteinSide 2.. Its function is as follows. Part of the Sec protein translocase complex. Interacts with the SecYEG preprotein conducting channel. Has a central role in coupling the hydrolysis of ATP to the transfer of proteins into and across the cell membrane, serving both as a receptor for the preprotein-SecB complex and as an ATP-driven molecular motor driving the stepwise translocation of polypeptide chains across the membrane. In Parvibaculum lavamentivorans (strain DS-1 / DSM 13023 / NCIMB 13966), this protein is Protein translocase subunit SecA.